A 148-amino-acid chain; its full sequence is uncharacterized protein (148 aa).

The HTH asnC-type domain occupies 2–63; it reads LDELDKRILY…LINPFKAGYE (62 aa). The H-T-H motif DNA-binding region spans 21–40; the sequence is YSEIARILGVPESTVRVRVK.

This is an uncharacterized protein from Pyrococcus furiosus (strain ATCC 43587 / DSM 3638 / JCM 8422 / Vc1).